Reading from the N-terminus, the 261-residue chain is Probable septum site-determining protein MinC (261 aa).

This sequence belongs to the MinC family. Interacts with MinD and FtsZ.

Its function is as follows. Cell division inhibitor that blocks the formation of polar Z ring septums. Rapidly oscillates between the poles of the cell to destabilize FtsZ filaments that have formed before they mature into polar Z rings. Prevents FtsZ polymerization. The sequence is that of Probable septum site-determining protein MinC from Burkholderia cenocepacia (strain ATCC BAA-245 / DSM 16553 / LMG 16656 / NCTC 13227 / J2315 / CF5610) (Burkholderia cepacia (strain J2315)).